The following is a 463-amino-acid chain: tRNA-splicing endonuclease subunit Sen2 (463 aa).

2 positions are modified to phosphoserine: serine 32 and serine 147. Residues 120 to 213 are disordered; it reads HDESTVQKIL…VASPSSLNGH (94 aa). 2 stretches are compositionally biased toward basic and acidic residues: residues 139 to 149 and 159 to 170; these read PYRERKGESPQ and SSLEGREGKDEL. Active-site residues include tyrosine 367 and histidine 375. Residues serine 406, serine 409, and serine 413 each carry the phosphoserine modification. Lysine 414 is an active-site residue.

Belongs to the tRNA-intron endonuclease family. In terms of assembly, tRNA splicing endonuclease is a heterotetramer composed of TSEN2, TSEN15, TSEN34/LENG5 and TSEN54. tRNA splicing endonuclease complex also contains proteins of the pre-mRNA 3'-end processing machinery such as CLP1, CPSF1, CPSF4 and CSTF2.

Its subcellular location is the nucleus. It localises to the nucleolus. It catalyses the reaction pretRNA = a 3'-half-tRNA molecule with a 5'-OH end + a 5'-half-tRNA molecule with a 2',3'-cyclic phosphate end + an intron with a 2',3'-cyclic phosphate and a 5'-hydroxyl terminus.. In terms of biological role, constitutes one of the two catalytic subunit of the tRNA-splicing endonuclease complex, a complex responsible for identification and cleavage of the splice sites in pre-tRNA. It cleaves pre-tRNA at the 5'- and 3'-splice sites to release the intron. The products are an intron and two tRNA half-molecules bearing 2',3'-cyclic phosphate and 5'-OH termini. There are no conserved sequences at the splice sites, but the intron is invariably located at the same site in the gene, placing the splice sites an invariant distance from the constant structural features of the tRNA body. Probably carries the active site for 5'-splice site cleavage. The tRNA splicing endonuclease is also involved in mRNA processing via its association with pre-mRNA 3'-end processing factors, establishing a link between pre-tRNA splicing and pre-mRNA 3'-end formation, suggesting that the endonuclease subunits function in multiple RNA-processing events. This is tRNA-splicing endonuclease subunit Sen2 (Tsen2) from Rattus norvegicus (Rat).